Consider the following 129-residue polypeptide: Small ribosomal subunit protein uS11 (129 aa).

Belongs to the universal ribosomal protein uS11 family. In terms of assembly, part of the 30S ribosomal subunit.

Its function is as follows. Located on the platform of the 30S subunit. The protein is Small ribosomal subunit protein uS11 of Haloarcula marismortui (strain ATCC 43049 / DSM 3752 / JCM 8966 / VKM B-1809) (Halobacterium marismortui).